Here is a 194-residue protein sequence, read N- to C-terminus: Probable GTP-binding protein EngB (194 aa).

The EngB-type G domain maps to 22-194 (GKPEIALVGR…EVWHWIEQHI (173 aa)). Residues 30-37 (GRSNVGKS), 57-61 (GKTQT), 75-78 (DVPG), 142-145 (TKSD), and 175-177 (FSS) contribute to the GTP site. Serine 37 and threonine 59 together coordinate Mg(2+).

Belongs to the TRAFAC class TrmE-Era-EngA-EngB-Septin-like GTPase superfamily. EngB GTPase family. Mg(2+) serves as cofactor.

Necessary for normal cell division and for the maintenance of normal septation. The protein is Probable GTP-binding protein EngB of Leuconostoc mesenteroides subsp. mesenteroides (strain ATCC 8293 / DSM 20343 / BCRC 11652 / CCM 1803 / JCM 6124 / NCDO 523 / NBRC 100496 / NCIMB 8023 / NCTC 12954 / NRRL B-1118 / 37Y).